Here is a 464-residue protein sequence, read N- to C-terminus: Fumarate hydratase class II (464 aa).

Residues 98–100 (SGT), 129–132 (HPND), 139–141 (SSN), and threonine 187 contribute to the substrate site. Histidine 188 acts as the Proton donor/acceptor in catalysis. Serine 318 is an active-site residue. Substrate-binding positions include serine 319 and 324 to 326 (KVN).

It belongs to the class-II fumarase/aspartase family. Fumarase subfamily. In terms of assembly, homotetramer.

It is found in the cytoplasm. The catalysed reaction is (S)-malate = fumarate + H2O. The protein operates within carbohydrate metabolism; tricarboxylic acid cycle; (S)-malate from fumarate: step 1/1. Involved in the TCA cycle. Catalyzes the stereospecific interconversion of fumarate to L-malate. This is Fumarate hydratase class II from Haemophilus ducreyi (strain 35000HP / ATCC 700724).